The primary structure comprises 274 residues: Kit ligand (274 aa).

An N-terminal signal peptide occupies residues 1–25 (MKKTQTWIITCIYLQLLLFNPLVHS). At Gln-26 the chain carries Pyrrolidone carboxylic acid. The Extracellular segment spans residues 26-215 (QGICRNRVTD…SNSIEDSSLQ (190 aa)). Disulfide bonds link Cys-29–Cys-114 and Cys-68–Cys-164. N-linked (GlcNAc...) asparagine glycosylation is found at Asn-90, Asn-97, Asn-145, and Asn-196. The helical transmembrane segment at 216–238 (WAAVALPAFFSLVIGFAFGALYW) threads the bilayer. At 239–274 (KKKQPNLTRTVENRQINEEDNEISMLQEKEREFQEV) the chain is on the cytoplasmic side.

It belongs to the SCF family. As to quaternary structure, homodimer, non-covalently linked. In terms of processing, a soluble form is produced by proteolytic processing of the extracellular domain.

It localises to the cytoplasm. Its subcellular location is the cytoskeleton. It is found in the cell membrane. The protein localises to the cell projection. The protein resides in the lamellipodium. It localises to the filopodium. Its subcellular location is the secreted. Its function is as follows. Stimulates the proliferation of mast cells. Able to augment the proliferation of both myeloid and lymphoid hematopoietic progenitors in bone marrow culture. Also mediates cell-cell adhesion. Acts synergistically with other cytokines, probably interleukins. This is Kit ligand (KITLG) from Capra hircus (Goat).